We begin with the raw amino-acid sequence, 347 residues long: Mitochondrial carrier protein rim2 (347 aa).

Solcar repeat units follow at residues 32–136 (PPPL…GKRI), 146–234 (ENSQ…FKHA), and 256–345 (LDWG…IMHF). The next 6 membrane-spanning stretches (helical) occupy residues 38 to 58 (FIAGGVAGMLGAIATAPLDVV), 105 to 125 (TRALFRGLGPNLIGTIPARSI), 152 to 172 (LMAAAIAGVITSAATNPIWLV), 214 to 233 (SLLGVGESTLQWVLYEKFKH), 262 to 282 (LGGAGIAKFMAAGIAYPHEVV), and 317 to 338 (LYGGLTAHLLRVVPNACILFGS).

The protein resides in the mitochondrion inner membrane. It carries out the reaction 5-methyl-UTP(out) + UTP(in) = 5-methyl-UTP(in) + UTP(out). Functionally, mitochondrial transporter that imports/exports pyrimidine nucleotides into and from mitochondria. Selectively transports uridine, thymidine, and cytosine (deoxy)nucleoside di- and triphosphates by an antiport mechanism. Also transports, with lower efficiency, uridine, thymidine, and cytosine (deoxy)nucleoside monophosphates as well as guanosine (deoxy)nucleoside di- and triphosphate. May import (deoxy)nucleoside triphosphates in exchange for intramitochondrial (deoxy)nucleoside monophosphates, thus providing precursors necessary for de novo synthesis of mitochondrial DNA and RNA while exporting products of their catabolism. Mediates the transport of iron and other divalent metal ions like copper and zinc across the mitochondrial inner membrane in a pyrimidine nucleotide-dependent fashion. Catalyzes the co-import of pyrimidine nucleotides and divalent metal ions including ferrous iron. Participates in mitochondrial genome maintenance, regulation of mitochondrial membrane potential and mitochondrial respiration. The chain is Mitochondrial carrier protein rim2 (rim2) from Schizosaccharomyces pombe (strain 972 / ATCC 24843) (Fission yeast).